The following is a 393-amino-acid chain: MMRYPEHADPVITLTAGPVNAYPEVLRGLGRTVLYDYDPAFQLLYEKVVDKAQKAMRLSNKPVILHGEPVLGLEAAAASLISPDDVVLNLASGVYGKGFGYWAKRYSPHLLEIEVPYNEAIDPQAVADMLKAHPEITVVSVCHHDTPSGTINPIDAIGALVSAHGAYLIVDAVSSFGGMKTHPEDCKADIYVTGPNKCLGAPPGLTMMGVSERAWAKMKANPLAPRASMLSIVDWENAWSRDKPFPFTPSVSEINGLDVALDLYLNEGPEAVWARHALTAKAMRAGVTAMGLSVWAASDSIASPTTTAVRTPDGVDEKALRQAARARYGVVFSSGRGETLGKLTRIGHMGPTAQPIYAIAALTALGGAMNAAGRKLAIGKGIEAALAVIDADA.

The pyridoxal 5'-phosphate site is built by glutamate 68, tyrosine 95, and threonine 146. Lysine 197 carries the post-translational modification N6-(pyridoxal phosphate)lysine. Arginine 345 lines the pyridoxal 5'-phosphate pocket.

The protein belongs to the class-V pyridoxal-phosphate-dependent aminotransferase family. As to quaternary structure, homotetramer. It depends on pyridoxal 5'-phosphate as a cofactor.

The enzyme catalyses pyridoxamine + pyruvate = pyridoxal + L-alanine. In terms of biological role, catalyzes a reversible transamination reaction between pyridoxamine and pyruvate to form pyridoxal and L-alanine. This Mesorhizobium japonicum (strain LMG 29417 / CECT 9101 / MAFF 303099) (Mesorhizobium loti (strain MAFF 303099)) protein is Pyridoxamine--pyruvate transaminase (ppaT).